Consider the following 180-residue polypeptide: Ribosome maturation factor RimM (180 aa).

One can recognise a PRC barrel domain in the interval 99-172 (EDEFYQVDLI…FLVVDPVAAG (74 aa)).

This sequence belongs to the RimM family. In terms of assembly, binds ribosomal protein uS19.

Its subcellular location is the cytoplasm. An accessory protein needed during the final step in the assembly of 30S ribosomal subunit, possibly for assembly of the head region. Essential for efficient processing of 16S rRNA. May be needed both before and after RbfA during the maturation of 16S rRNA. It has affinity for free ribosomal 30S subunits but not for 70S ribosomes. The chain is Ribosome maturation factor RimM from Bartonella henselae (strain ATCC 49882 / DSM 28221 / CCUG 30454 / Houston 1) (Rochalimaea henselae).